The primary structure comprises 549 residues: Glucose-6-phosphate isomerase (549 aa).

An N6-acetyllysine mark is found at Lys80, Lys228, and Lys234. Glu355 functions as the Proton donor in the catalytic mechanism. Residues His386 and Lys514 contribute to the active site.

This sequence belongs to the GPI family.

The protein resides in the cytoplasm. It catalyses the reaction alpha-D-glucose 6-phosphate = beta-D-fructose 6-phosphate. It participates in carbohydrate biosynthesis; gluconeogenesis. It functions in the pathway carbohydrate degradation; glycolysis; D-glyceraldehyde 3-phosphate and glycerone phosphate from D-glucose: step 2/4. Catalyzes the reversible isomerization of glucose-6-phosphate to fructose-6-phosphate. This Escherichia coli (strain SMS-3-5 / SECEC) protein is Glucose-6-phosphate isomerase.